The chain runs to 130 residues: Small ribosomal subunit protein uS9 (130 aa).

The tract at residues 102–130 is disordered; sequence GFLTRDPRMKERKKYGLKKARRAPQFSKR. Basic residues predominate over residues 111–130; that stretch reads KERKKYGLKKARRAPQFSKR.

This sequence belongs to the universal ribosomal protein uS9 family.

The polypeptide is Small ribosomal subunit protein uS9 (Clostridium novyi (strain NT)).